The chain runs to 160 residues: 2-C-methyl-D-erythritol 2,4-cyclodiphosphate synthase (160 aa).

Positions 9 and 11 each coordinate a divalent metal cation. Residues 9–11 and 35–36 contribute to the 4-CDP-2-C-methyl-D-erythritol 2-phosphate site; these read DVH and HS. H43 provides a ligand contact to a divalent metal cation. Residues 57-59, 62-66, 133-136, F140, and R143 each bind 4-CDP-2-C-methyl-D-erythritol 2-phosphate; these read DIG, FPDTD, and TTTE.

This sequence belongs to the IspF family. In terms of assembly, homotrimer. It depends on a divalent metal cation as a cofactor.

It catalyses the reaction 4-CDP-2-C-methyl-D-erythritol 2-phosphate = 2-C-methyl-D-erythritol 2,4-cyclic diphosphate + CMP. Its pathway is isoprenoid biosynthesis; isopentenyl diphosphate biosynthesis via DXP pathway; isopentenyl diphosphate from 1-deoxy-D-xylulose 5-phosphate: step 4/6. Its function is as follows. Involved in the biosynthesis of isopentenyl diphosphate (IPP) and dimethylallyl diphosphate (DMAPP), two major building blocks of isoprenoid compounds. Catalyzes the conversion of 4-diphosphocytidyl-2-C-methyl-D-erythritol 2-phosphate (CDP-ME2P) to 2-C-methyl-D-erythritol 2,4-cyclodiphosphate (ME-CPP) with a corresponding release of cytidine 5-monophosphate (CMP). The sequence is that of 2-C-methyl-D-erythritol 2,4-cyclodiphosphate synthase from Haemophilus ducreyi (strain 35000HP / ATCC 700724).